Here is a 101-residue protein sequence, read N- to C-terminus: Small ribosomal subunit protein eS24 (101 aa).

It belongs to the eukaryotic ribosomal protein eS24 family.

The protein is Small ribosomal subunit protein eS24 of Methanosarcina acetivorans (strain ATCC 35395 / DSM 2834 / JCM 12185 / C2A).